We begin with the raw amino-acid sequence, 694 residues long: Putative serine/threonine-protein kinase R679 (694 aa).

Residues 167–548 enclose the Protein kinase domain; the sequence is ITKNKTVGKG…ITNILKHLFT (382 aa). Residues 173–181 and K196 each bind ATP; that span reads VGKGAAGIA. The Proton acceptor role is filled by D395.

The protein belongs to the protein kinase superfamily. Ser/Thr protein kinase family.

The protein localises to the virion. It catalyses the reaction L-seryl-[protein] + ATP = O-phospho-L-seryl-[protein] + ADP + H(+). It carries out the reaction L-threonyl-[protein] + ATP = O-phospho-L-threonyl-[protein] + ADP + H(+). The protein is Putative serine/threonine-protein kinase R679 of Acanthamoeba polyphaga (Amoeba).